A 233-amino-acid chain; its full sequence is Peroxisomal membrane protein 11-5 (233 aa).

Residues 1-92 (MSSLESARAD…PLILLGKSKN (92 aa)) are Cytoplasmic-facing. Residues 93–113 (ALLSTFLFLDQIVWAGRTGIY) traverse the membrane as a helical segment. Topologically, residues 114–206 (KNKERAEFLS…LLQLAPKKVT (93 aa)) are lumenal. Residues 207–226 (PRVTGAFGFASSLIACYQLL) traverse the membrane as a helical segment.

It belongs to the peroxin-11 family. As to expression, expressed in seedlings, roots, shoots, leaf sheaths, flag leaf, panicles, spikelets, and endosperm.

Its subcellular location is the peroxisome membrane. Functionally, involved in peroxisomal proliferation. This Oryza sativa subsp. japonica (Rice) protein is Peroxisomal membrane protein 11-5 (PEX11-5).